A 286-amino-acid chain; its full sequence is MEPKETLRQRWPGRGRTEETGAMKKSDDAPAVMTVEHLNMYYGSFMALKDVSMVIRKNRITALIGPSGCGKSTFIRSLNRMHEIVPGARVEGRVTLDGEDIYAPEVDPVRVRRRVGMVFQKPNPFPTMSIYDNVIAGLKLGRKRKKSELDEIVERTLRQAALWDEVKNKLSESGTSLSGGQQQRLCIARTLALEPEVILMDEPASALDPVSTQKIEDAMLELKEQYTVVIVTHNMQQAARVSDYTGFFFIEDMGQPGQLWEFGETEKIFSNPDRKETEDYVTGRFG.

The tract at residues 1-27 (MEPKETLRQRWPGRGRTEETGAMKKSD) is disordered. The span at 15-27 (GRTEETGAMKKSD) shows a compositional bias: basic and acidic residues. The ABC transporter domain occupies 33–281 (MTVEHLNMYY…PDRKETEDYV (249 aa)). 65–72 (GPSGCGKS) is a binding site for ATP.

It belongs to the ABC transporter superfamily. Phosphate importer (TC 3.A.1.7) family. The complex is composed of two ATP-binding proteins (PstB), two transmembrane proteins (PstC and PstA) and a solute-binding protein (PstS).

The protein localises to the cell membrane. The enzyme catalyses phosphate(out) + ATP + H2O = ADP + 2 phosphate(in) + H(+). In terms of biological role, part of the ABC transporter complex PstSACB involved in phosphate import. Responsible for energy coupling to the transport system. This Rubrobacter xylanophilus (strain DSM 9941 / JCM 11954 / NBRC 16129 / PRD-1) protein is Phosphate import ATP-binding protein PstB.